The sequence spans 273 residues: Phosphate import ATP-binding protein PstB (273 aa).

An ABC transporter domain is found at 19–258; it reads ISIQNVTISY…FNETEKIFNS (240 aa). 51-58 is an ATP binding site; it reads GPSGCGKS.

Belongs to the ABC transporter superfamily. Phosphate importer (TC 3.A.1.7) family. In terms of assembly, the complex is composed of two ATP-binding proteins (PstB), two transmembrane proteins (PstC and PstA) and a solute-binding protein (PstS).

It localises to the cell inner membrane. It catalyses the reaction phosphate(out) + ATP + H2O = ADP + 2 phosphate(in) + H(+). Part of the ABC transporter complex PstSACB involved in phosphate import. Responsible for energy coupling to the transport system. In Parasynechococcus marenigrum (strain WH8102), this protein is Phosphate import ATP-binding protein PstB.